The chain runs to 140 residues: MIDLNALCSECGVKFYADELISENSRQIYRVYITKKNGVNLDDCEALSRLLSPILDVEPPTSGAFTLEVSSPGLERKLTTPSNFENSLGELVKITLKNGEKISGEILSFKDEILKLKTAENNEISVNFNEIKKAKTYIEW.

It belongs to the RimP family.

The protein resides in the cytoplasm. In terms of biological role, required for maturation of 30S ribosomal subunits. This chain is Ribosome maturation factor RimP, found in Campylobacter hominis (strain ATCC BAA-381 / DSM 21671 / CCUG 45161 / LMG 19568 / NCTC 13146 / CH001A).